Here is a 513-residue protein sequence, read N- to C-terminus: Cytochrome P450 monooxygenase asaD (513 aa).

A helical transmembrane segment spans residues 14-34; it reads ILYPFLFGIFAVASLCIATLL. Asn258, Asn370, Asn431, and Asn441 each carry an N-linked (GlcNAc...) asparagine glycan. Heme is bound at residue Cys461.

This sequence belongs to the cytochrome P450 family. Heme is required as a cofactor.

It localises to the membrane. Its pathway is secondary metabolite biosynthesis. Cytochrome P450 monooxygenase; part of the gene cluster that mediates the biosynthesis of aspergillic acid, a hydroxamic acid-containing pyrazinone with aliphatic side chains that originates from leucine (Leu) and isoleucine (Ile). Aspergillic acid has antibiotic properties and was shown to be lethal to mice. The first step in the pathway is the production of deoxyaspergillic acid via a condensation between the Ile amine and the Leu carboxylic acid, followed by a reductive release from the protein forming the dipeptide aldehyde NH(2)-Leu-Ile-CHO, which could undergo an intermolecular cyclization resulting in a dihydropyrazinone. As the NRPS asaC lacks a condensation domain, it is improbable that it is responsible for condensation of Leu and Ile. One possibility is that asaC acts on a previously condensed dipeptide and functions as a Leu-Ile reductase to yield deoxyaspergillic acid. After asaC forms deoxyaspergillic acid, the cytochrome P450 asaD oxidizes the pyrazinone to the hydroxamic acid-containing bioactive metabolite aspergillic acid. The hydroxylase/desaturase asaB can then convert aspergillic acid to hydroxyaspergillic acid. Both aspergillic acid and hydroxyaspergillic acid can form complexes with iron producing ferriaspergillin analogs. This chain is Cytochrome P450 monooxygenase asaD, found in Aspergillus flavus (strain ATCC 200026 / FGSC A1120 / IAM 13836 / NRRL 3357 / JCM 12722 / SRRC 167).